The following is a 153-amino-acid chain: Putative pre-16S rRNA nuclease (153 aa).

The protein belongs to the YqgF nuclease family.

It localises to the cytoplasm. Its function is as follows. Could be a nuclease involved in processing of the 5'-end of pre-16S rRNA. The sequence is that of Putative pre-16S rRNA nuclease from Prochlorococcus marinus (strain MIT 9215).